Consider the following 288-residue polypeptide: MSQVDNRNSSAAKRARTDGGRREDDWICPSCGNVNFSFRTTCNMRNCTQPRPADHNGKSAPKPMQHQQGFSSPGAYLGSGGPPPVYMGGSPYGSPLFNGSSMPPYDVPFSGGSPYHFNYNSRMPAGAHYRPLHMSGPPPYHGGSMMGSGGMYGMPPPIDRYGLGMAMGPGSAAAMMPRPRFYPDEKSQKRDSTRDNDWTCPNCGNVNFSFRTVCNMRKCNTPKPGSQQGGSSDKISKQNAPEGSWKCDNCGNINYPFRSKCNRQNCGADKPGDRSNGSPSRAPEENDQ.

Polar residues predominate over residues 1 to 11 (MSQVDNRNSSA). Disordered stretches follow at residues 1 to 24 (MSQV…RRED), 52 to 77 (PADH…GAYL), 176 to 198 (MPRP…DNDW), 222 to 248 (PKPG…WKCD), and 265 to 288 (NCGA…ENDQ). Positions 15 to 24 (ARTDGGRRED) are enriched in basic and acidic residues. RanBP2-type zinc fingers lie at residues 22–53 (REDD…PRPA), 194–225 (RDND…PKPG), and 241–272 (PEGS…DKPG). Positions 181 to 197 (FYPDEKSQKRDSTRDND) are enriched in basic and acidic residues. Residues 223–241 (KPGSQQGGSSDKISKQNAP) are compositionally biased toward polar residues. Position 278 is a phosphoserine (Ser278).

The sequence is that of RanBP2-type zinc finger protein At1g67325 from Arabidopsis thaliana (Mouse-ear cress).